The primary structure comprises 566 residues: MEIIFGQNKKEQLEPVQAKVTGSIPAWLQGTLLRNGPGMHTVGESKYNHWFDGLALLHSFSIRDGEVFYRSKYLQSDTYIANIEANRIVVSEFGTMAYPDPCKNIFSKAFSYLSHTIPDFTDNCLINIMKCGEDFYATTETNYIRKIDPQTLETLEKVDYRKYVAVNLATSHPHYDEAGNVLNMGTSVVDKGRTKYVIFKIPATVPDSKKKGKSPVKHAEVFCSISSRSLLSPSYYHSFGVTENYVVFLEQPFKLDILKMATAYMRGVSWASCMSFDREDKTYIHIIDQRTRKPVPTKFYTDPMVVFHHVNAYEEDGCVLFDVIAYEDSSLYQLFYLANLNKDFEEKSRLTSVPTLRRFAVPLHVDKDAEVGSNLVKVSSTTATALKEKDGHVYCQPEVLYEGLELPRINYAYNGKPYRYIFAAEVQWSPVPTKILKYDILTKSSLKWSEESCWPAEPLFVPTPGAKDEDDGVILSAIVSTDPQKLPFLLILDAKSFTELARASVDADMHLDLHGLFIPDADWNAVKQTPAETQEVENSDHPTDPTAPELSHSENDFTAGHGGSSL.

4 residues coordinate Fe cation: His-172, His-237, His-308, and His-514. A disordered region spans residues 530 to 566 (PAETQEVENSDHPTDPTAPELSHSENDFTAGHGGSSL).

Belongs to the carotenoid oxygenase family. The cofactor is Fe(2+). In terms of tissue distribution, expressed in liver, kidney, small intestine and testis.

Its subcellular location is the cytoplasm. It is found in the cytosol. The catalysed reaction is all-trans-beta-carotene + O2 = 2 all-trans-retinal. Its pathway is cofactor metabolism; retinol metabolism. In terms of biological role, symmetrically cleaves beta-carotene into two molecules of retinal using a dioxygenase mechanism. The protein is Beta,beta-carotene 15,15'-dioxygenase of Mus musculus (Mouse).